A 631-amino-acid chain; its full sequence is Phosphomethylpyrimidine synthase (631 aa).

Residues asparagine 239, methionine 268, tyrosine 297, histidine 333, 353–355 (SRG), 394–397 (DGLR), and glutamate 433 each bind substrate. Histidine 437 provides a ligand contact to Zn(2+). Residue tyrosine 460 coordinates substrate. Histidine 501 serves as a coordination point for Zn(2+). [4Fe-4S] cluster is bound by residues cysteine 581, cysteine 584, and cysteine 589.

It belongs to the ThiC family. As to quaternary structure, homodimer. It depends on [4Fe-4S] cluster as a cofactor.

The catalysed reaction is 5-amino-1-(5-phospho-beta-D-ribosyl)imidazole + S-adenosyl-L-methionine = 4-amino-2-methyl-5-(phosphooxymethyl)pyrimidine + CO + 5'-deoxyadenosine + formate + L-methionine + 3 H(+). Its pathway is cofactor biosynthesis; thiamine diphosphate biosynthesis. Its function is as follows. Catalyzes the synthesis of the hydroxymethylpyrimidine phosphate (HMP-P) moiety of thiamine from aminoimidazole ribotide (AIR) in a radical S-adenosyl-L-methionine (SAM)-dependent reaction. This Shigella boydii serotype 4 (strain Sb227) protein is Phosphomethylpyrimidine synthase.